The chain runs to 516 residues: MKKLRASVRSHKKQPANHKRRGKCALSSSQAKPSGLDGLAKQKREELLKTPVSPYHLFSDIADVTAFRRNLLSWYDQEKRDLPWRKRVKEETNLDRRAYAVWVSEVMLQQTQVATVIDYYTRWMQKWPTLQDLASASLEEVNQLWSGLGYYSRGRRLQEGARKVVEELGGHVPRTAETLQQLLPGVGRYTAGAIASIAFDQVTGVVDGNVIRVLCRVRAIGADPTSSFVSHHLWDLAQQLVDPARPGDFNQAAMELGATVCTPQRPLCNHCPVQSLCRAHQRVGQGRLSALPGSPDIEECALNTRQCQLCLPSTNPWDPNMGVVNFPRKASRRPPREEYSATCVVEQPGATGGPLILLVQRPNSGLLAGLWEFPSVTLEPSGQHQHKALLQELQHWSAPLPTTPLQHLGEVIHVFSHIKLTYQVYSLALEGQTPASTTLPGARWLTWEEFRNAAVSTAMKKVFRVYEEHRRGTCKGSKRPQVCTPSSRKKPSRGQQVLDRFFQRHIPTHKPNSTTQ.

Positions 1–23 (MKKLRASVRSHKKQPANHKRRGK) are enriched in basic residues. The disordered stretch occupies residues 1–38 (MKKLRASVRSHKKQPANHKRRGKCALSSSQAKPSGLDG). The active-site Proton donor/acceptor is E105. [4Fe-4S] cluster contacts are provided by C261, C268, C271, and C277. One can recognise a Nudix hydrolase domain in the interval 335 to 467 (PREEYSATCV…AMKKVFRVYE (133 aa)). Positions 376-398 (VTLEPSGQHQHKALLQELQHWSA) match the Nudix box motif. The segment at 474–516 (CKGSKRPQVCTPSSRKKPSRGQQVLDRFFQRHIPTHKPNSTTQ) is disordered.

The protein belongs to the Nth/MutY family. Requires [4Fe-4S] cluster as cofactor. As to expression, expressed in brain, spleen, heart, liver and kidney.

Its subcellular location is the nucleus. It is found in the mitochondrion. It carries out the reaction Hydrolyzes free adenine bases from 7,8-dihydro-8-oxoguanine:adenine mismatched double-stranded DNA, leaving an apurinic site.. Functionally, involved in oxidative DNA damage repair. Initiates repair of A*oxoG to C*G by removing the inappropriately paired adenine base from the DNA backbone. Possesses both adenine and 2-OH-A DNA glycosylase activities. The protein is Adenine DNA glycosylase (Mutyh) of Rattus norvegicus (Rat).